The primary structure comprises 489 residues: Cobyric acid synthase (489 aa).

The GATase cobBQ-type domain maps to 254–442 (ARVIAVPVLP…VHGLFADDRQ (189 aa)). Residue C336 is the Nucleophile of the active site. The active site involves H434.

Belongs to the CobB/CobQ family. CobQ subfamily.

It participates in cofactor biosynthesis; adenosylcobalamin biosynthesis. Functionally, catalyzes amidations at positions B, D, E, and G on adenosylcobyrinic A,C-diamide. NH(2) groups are provided by glutamine, and one molecule of ATP is hydrogenolyzed for each amidation. The protein is Cobyric acid synthase of Methylobacterium nodulans (strain LMG 21967 / CNCM I-2342 / ORS 2060).